The following is a 453-amino-acid chain: Gamma-aminobutyric acid receptor subunit alpha-6 (453 aa).

The signal sequence occupies residues Met-1–Ala-19. Residues Gln-20–Phe-243 are Extracellular-facing. Asn-31 is a glycosylation site (N-linked (GlcNAc...) asparagine). 4-aminobutanoate is bound at residue Arg-84. N-linked (GlcNAc...) asparagine glycans are attached at residues Asn-128 and Asn-141. Residue Thr-147 coordinates 4-aminobutanoate. Cys-156 and Cys-170 are oxidised to a cystine. Residues Met-244 to Ile-264 traverse the membrane as a helical segment. Topologically, residues Asn-265–Pro-270 are cytoplasmic. The chain crosses the membrane as a helical span at residues Ala-271–Ala-290. Residues Arg-291–Asp-304 lie on the Extracellular side of the membrane. The helical transmembrane segment at Trp-305 to Asn-325 threads the bilayer. At Tyr-326–Arg-422 the chain is on the cytoplasmic side. The residue at position 375 (Ser-375) is a Phosphoserine. Residues Ile-423–Lys-443 form a helical membrane-spanning segment. The Extracellular portion of the chain corresponds to Asp-444–Glu-453.

This sequence belongs to the ligand-gated ion channel (TC 1.A.9) family. Gamma-aminobutyric acid receptor (TC 1.A.9.5) subfamily. GABRA6 sub-subfamily. As to quaternary structure, heteropentamer, formed by a combination of alpha (GABRA1-6), beta (GABRB1-3), gamma (GABRG1-3), delta (GABRD), epsilon (GABRE), rho (GABRR1-3), pi (GABRP) and theta (GABRQ) chains, each subunit exhibiting distinct physiological and pharmacological properties. Binds UBQLN1. In terms of tissue distribution, expressed in brain, in cerebellar granule cells.

The protein resides in the postsynaptic cell membrane. The protein localises to the cell membrane. The enzyme catalyses chloride(in) = chloride(out). Its function is as follows. Alpha subunit of the heteropentameric ligand-gated chloride channel gated by gamma-aminobutyric acid (GABA), a major inhibitory neurotransmitter in the brain. GABA-gated chloride channels, also named GABA(A) receptors (GABAAR), consist of five subunits arranged around a central pore and contain GABA active binding site(s) located at the alpha and beta subunit interface(s). When activated by GABA, GABAARs selectively allow the flow of chloride anions across the cell membrane down their electrochemical gradient. Alpha-6/GABRA6 subunits are found at both synaptic and extrasynaptic sites. Chloride influx into the postsynaptic neuron following GABAAR opening decreases the neuron ability to generate a new action potential, thereby reducing nerve transmission. Extrasynaptic alpha-6-containing receptors contribute to the tonic GABAergic inhibition. Alpha-6 subunits are also present on glutamatergic synapses. The polypeptide is Gamma-aminobutyric acid receptor subunit alpha-6 (Mus musculus (Mouse)).